A 1072-amino-acid chain; its full sequence is Netrin receptor unc-5 (1072 aa).

The N-terminal stretch at 1-30 (MAVINKAGNVIALLLVKLQLILLFTLSVSG) is a signal peptide. Residues 31-440 (ELPQLDYGSL…SSEAEEAGDL (410 aa)) are Extracellular-facing. The tract at residues 77 to 100 (LGNSSEDENVRPQQGSSSSGLGSS) is disordered. Residue asparagine 79 is glycosylated (N-linked (GlcNAc...) asparagine). Positions 128–224 (PIFLIEPESV…RGVVKSQAAT (97 aa)) constitute an Ig-like domain. 5 cysteine pairs are disulfide-bonded: cysteine 149-cysteine 207, cysteine 253-cysteine 303, cysteine 336-cysteine 375, cysteine 338-cysteine 378, and cysteine 352-cysteine 364. Positions 232–314 (KSFNQSPTSL…AENIAGRRVS (83 aa)) constitute an Ig-like C2-type domain. An N-linked (GlcNAc...) asparagine glycan is attached at asparagine 300. TSP type-1 domains lie at 324-379 (NGGW…AACP) and 398-499 (MARW…EQCQ). Residues 441-461 (LLGAPGVGMAALIAAAGVGAV) form a helical membrane-spanning segment. Residues 462 to 1072 (GSPSEATGSS…IVETIGPLWI (611 aa)) are Cytoplasmic-facing. The ZU5 domain occupies 654–802 (SSTYEMLGSA…LGHFTVVAEP (149 aa)). In terms of domain architecture, Death spans 980–1067 (LICGALDPPR…DVLDIIVETI (88 aa)).

The protein belongs to the unc-5 family. In terms of processing, phosphorylated on different cytoplasmic tyrosine residues. In terms of tissue distribution, prior to gastrulation, it is strongly expressed in the presumptive mesoderm. Mesodermal expression begins to fade during stages 13-14, persisting only in the cells that form the dorsal vessel. Expressed within the CNS from late stage 13, shortly after the first axons have extended. Detected in several dispersed clusters of cells within the CNS, increasing in number as development proceeds. Also expressed in the peripheral and exit glia, which migrate laterally out of the CNS between stages 14 and 17. Strongly expressed in motor axons that exit the CNS ipsilaterally via the segmental nerve root (SN). Not expressed on either commissural or longitudinal axons within the CNS, nor on motor axons that exit via the intersegmental nerve (ISN). In the periphery, it is detected on all branches of the SN. Also expressed at high level in exit and peripheral glia along both the SN and ISN.

Its subcellular location is the membrane. Functionally, receptor for netrin required for motor axon guidance. Mediates both short- and long-range axon motor repulsion in the developing nervous system upon ligand binding. Also involved in glial migration. While short-range repulsion requires both fra and unc-5, long-range repulsion only requires unc-5. The protein is Netrin receptor unc-5 (unc-5) of Drosophila melanogaster (Fruit fly).